The following is a 271-amino-acid chain: Orotidine 5'-phosphate decarboxylase (271 aa).

Lysine 95 functions as the Proton donor in the catalytic mechanism.

The protein belongs to the OMP decarboxylase family. Type 2 subfamily.

The catalysed reaction is orotidine 5'-phosphate + H(+) = UMP + CO2. The protein operates within pyrimidine metabolism; UMP biosynthesis via de novo pathway; UMP from orotate: step 2/2. The chain is Orotidine 5'-phosphate decarboxylase (pyrF) from Ralstonia nicotianae (strain ATCC BAA-1114 / GMI1000) (Ralstonia solanacearum).